We begin with the raw amino-acid sequence, 158 residues long: MPLKTIEGTFIAPQGKYALVVGRFNSFVVESLVSGAVDALVRHGVSENDITIIRAPGAFEIPLVAQKVAQQGEYDAIIALGAVIRGGTPHFEYVAGECTKGLAQVSMEFGVPVAFGVLTVDSIEQAIERSGTKAGNKGAEAALSALEMVSLLSQLEAK.

Residues phenylalanine 24, 58–60, and 82–84 each bind 5-amino-6-(D-ribitylamino)uracil; these read AFE and AVI. 87 to 88 is a binding site for (2S)-2-hydroxy-3-oxobutyl phosphate; the sequence is GT. Residue histidine 90 is the Proton donor of the active site. Phenylalanine 115 is a 5-amino-6-(D-ribitylamino)uracil binding site. Arginine 129 contacts (2S)-2-hydroxy-3-oxobutyl phosphate.

Belongs to the DMRL synthase family. In terms of assembly, forms an icosahedral capsid composed of 60 subunits, arranged as a dodecamer of pentamers.

The catalysed reaction is (2S)-2-hydroxy-3-oxobutyl phosphate + 5-amino-6-(D-ribitylamino)uracil = 6,7-dimethyl-8-(1-D-ribityl)lumazine + phosphate + 2 H2O + H(+). It functions in the pathway cofactor biosynthesis; riboflavin biosynthesis; riboflavin from 2-hydroxy-3-oxobutyl phosphate and 5-amino-6-(D-ribitylamino)uracil: step 1/2. Catalyzes the formation of 6,7-dimethyl-8-ribityllumazine by condensation of 5-amino-6-(D-ribitylamino)uracil with 3,4-dihydroxy-2-butanone 4-phosphate. This is the penultimate step in the biosynthesis of riboflavin. This chain is 6,7-dimethyl-8-ribityllumazine synthase, found in Stutzerimonas stutzeri (strain A1501) (Pseudomonas stutzeri).